The sequence spans 218 residues: Elongation factor Ts (218 aa).

The tract at residues T82–V85 is involved in Mg(2+) ion dislocation from EF-Tu.

This sequence belongs to the EF-Ts family.

The protein resides in the cytoplasm. Functionally, associates with the EF-Tu.GDP complex and induces the exchange of GDP to GTP. It remains bound to the aminoacyl-tRNA.EF-Tu.GTP complex up to the GTP hydrolysis stage on the ribosome. This Prochlorococcus marinus (strain MIT 9313) protein is Elongation factor Ts.